The primary structure comprises 414 residues: 3-oxoacyl-[acyl-carrier-protein] synthase 2 (414 aa).

A Ketosynthase family 3 (KS3) domain is found at 4-411; it reads NKRVVITGMG…GHNAVLVFKK (408 aa). Catalysis depends on for beta-ketoacyl synthase activity residues cysteine 165, histidine 304, and histidine 341.

The protein belongs to the thiolase-like superfamily. Beta-ketoacyl-ACP synthases family.

It carries out the reaction a fatty acyl-[ACP] + malonyl-[ACP] + H(+) = a 3-oxoacyl-[ACP] + holo-[ACP] + CO2. The enzyme catalyses (9Z)-hexadecenoyl-[ACP] + malonyl-[ACP] + H(+) = 3-oxo-(11Z)-octadecenoyl-[ACP] + holo-[ACP] + CO2. The protein operates within lipid metabolism; fatty acid biosynthesis. In terms of biological role, involved in the type II fatty acid elongation cycle. Catalyzes the elongation of a wide range of acyl-ACP by the addition of two carbons from malonyl-ACP to an acyl acceptor. Can efficiently catalyze the conversion of palmitoleoyl-ACP (cis-hexadec-9-enoyl-ACP) to cis-vaccenoyl-ACP (cis-octadec-11-enoyl-ACP), an essential step in the thermal regulation of fatty acid composition. The chain is 3-oxoacyl-[acyl-carrier-protein] synthase 2 (fabF) from Staphylococcus aureus (strain Mu50 / ATCC 700699).